We begin with the raw amino-acid sequence, 413 residues long: Phosphopentomutase (413 aa).

Mn(2+) is bound by residues Asp11, Asp306, His311, Asp347, His348, and His359.

The protein belongs to the phosphopentomutase family. Requires Mn(2+) as cofactor.

The protein resides in the cytoplasm. It catalyses the reaction 2-deoxy-alpha-D-ribose 1-phosphate = 2-deoxy-D-ribose 5-phosphate. The enzyme catalyses alpha-D-ribose 1-phosphate = D-ribose 5-phosphate. It functions in the pathway carbohydrate degradation; 2-deoxy-D-ribose 1-phosphate degradation; D-glyceraldehyde 3-phosphate and acetaldehyde from 2-deoxy-alpha-D-ribose 1-phosphate: step 1/2. In terms of biological role, isomerase that catalyzes the conversion of deoxy-ribose 1-phosphate (dRib-1-P) and ribose 1-phosphate (Rib-1-P) to deoxy-ribose 5-phosphate (dRib-5-P) and ribose 5-phosphate (Rib-5-P), respectively. The sequence is that of Phosphopentomutase from Helicobacter pylori (strain Shi470).